The sequence spans 607 residues: Inactive metallocarboxypeptidase ECM14 (607 aa).

The N-terminal stretch at M1–A21 is a signal peptide. Positions I22–P174 are excised as a propeptide. The region spanning N202–L522 is the Peptidase M14 domain. H264 and E267 together coordinate Zn(2+). Substrate-binding positions include H264–E267, R322, and D339–R340. Residues C333 and C356 are joined by a disulfide bond. A glycan (N-linked (GlcNAc...) asparagine) is linked at N349. H396 serves as a coordination point for Zn(2+). Residue S397–Y398 participates in substrate binding. The tract at residues Q539 to R607 is disordered. The span at N550 to D571 shows a compositional bias: acidic residues. Positions G573–N590 are enriched in basic and acidic residues.

This sequence belongs to the peptidase M14 family. It depends on Zn(2+) as a cofactor.

Its subcellular location is the vacuole. It is found in the secreted. Its function is as follows. Inactive carboxypeptidase that may play a role in cell wall organization and biogenesis. The protein is Inactive metallocarboxypeptidase ECM14 (ECM14) of Ajellomyces capsulatus (strain NAm1 / WU24) (Darling's disease fungus).